The chain runs to 111 residues: MRLITLFLLLLLLAIQYPLWLGKGGWLRVWDMQKQVASQNQRNAELKQRNLKLEGEVKDLKEGTGAIEERARYELGMVKDDEGFVQFVAPAPKTSETPLPPPAALQPNHRH.

Over 1 to 3 (MRL) the chain is Cytoplasmic. A helical transmembrane segment spans residues 4–21 (ITLFLLLLLLAIQYPLWL). The Periplasmic portion of the chain corresponds to 22-111 (GKGGWLRVWD…PAALQPNHRH (90 aa)). Positions 28-64 (RVWDMQKQVASQNQRNAELKQRNLKLEGEVKDLKEGT) form a coiled coil. The segment at 90 to 111 (PAPKTSETPLPPPAALQPNHRH) is disordered.

This sequence belongs to the FtsB family. In terms of assembly, part of a complex composed of FtsB, FtsL and FtsQ.

Its subcellular location is the cell inner membrane. Essential cell division protein. May link together the upstream cell division proteins, which are predominantly cytoplasmic, with the downstream cell division proteins, which are predominantly periplasmic. This is Cell division protein FtsB from Ralstonia nicotianae (strain ATCC BAA-1114 / GMI1000) (Ralstonia solanacearum).